A 242-amino-acid chain; its full sequence is Ubiquinone biosynthesis O-methyltransferase (242 aa).

Positions 44, 64, 85, and 129 each coordinate S-adenosyl-L-methionine.

This sequence belongs to the methyltransferase superfamily. UbiG/COQ3 family.

It carries out the reaction a 3-demethylubiquinol + S-adenosyl-L-methionine = a ubiquinol + S-adenosyl-L-homocysteine + H(+). It catalyses the reaction a 3-(all-trans-polyprenyl)benzene-1,2-diol + S-adenosyl-L-methionine = a 2-methoxy-6-(all-trans-polyprenyl)phenol + S-adenosyl-L-homocysteine + H(+). It participates in cofactor biosynthesis; ubiquinone biosynthesis. Its function is as follows. O-methyltransferase that catalyzes the 2 O-methylation steps in the ubiquinone biosynthetic pathway. This is Ubiquinone biosynthesis O-methyltransferase from Yersinia pseudotuberculosis serotype O:1b (strain IP 31758).